Reading from the N-terminus, the 212-residue chain is Leucine efflux protein (212 aa).

Transmembrane regions (helical) follow at residues 12-32 (TYLV…LFVL), 49-69 (GVFI…ATLI), 71-91 (TTPI…LYLG), 122-142 (ILSL…VQFI), 153-173 (FFIL…FLII), and 188-208 (LAKV…ARLA).

Belongs to the Rht family.

It is found in the cell inner membrane. The catalysed reaction is L-leucine(in) + H(+)(out) = L-leucine(out) + H(+)(in). Leucine export is inhibited by the proton ionophore carbonyl cyanide m-chlorophenylhydrazone (CCCP). Functionally, exporter of leucine. Can also transport its natural analog L-alpha-amino-n-butyric acid and some other structurally unrelated amino acids. Leucine excretion is probably driven by proton motive force. This is Leucine efflux protein from Escherichia coli (strain K12).